Consider the following 539-residue polypeptide: Chaperonin GroEL 1 (539 aa).

Residues 29 to 32 (TLGP), 86 to 90 (DGTTT), Gly413, 478 to 480 (NAA), and Asp494 each bind ATP.

This sequence belongs to the chaperonin (HSP60) family. In terms of assembly, forms a cylinder of 14 subunits composed of two heptameric rings stacked back-to-back. Interacts with the co-chaperonin GroES.

It localises to the cytoplasm. The catalysed reaction is ATP + H2O + a folded polypeptide = ADP + phosphate + an unfolded polypeptide.. Its function is as follows. Together with its co-chaperonin GroES, plays an essential role in assisting protein folding. The GroEL-GroES system forms a nano-cage that allows encapsulation of the non-native substrate proteins and provides a physical environment optimized to promote and accelerate protein folding. The sequence is that of Chaperonin GroEL 1 from Corynebacterium diphtheriae (strain ATCC 700971 / NCTC 13129 / Biotype gravis).